The following is a 183-amino-acid chain: Potassium-transporting ATPase KdpC subunit (183 aa).

The helical transmembrane segment at 11 to 31 threads the bilayer; the sequence is LILLLAVVTGALYPLAVTGVA.

The protein belongs to the KdpC family. As to quaternary structure, the system is composed of three essential subunits: KdpA, KdpB and KdpC.

Its subcellular location is the cell inner membrane. In terms of biological role, part of the high-affinity ATP-driven potassium transport (or Kdp) system, which catalyzes the hydrolysis of ATP coupled with the electrogenic transport of potassium into the cytoplasm. This subunit acts as a catalytic chaperone that increases the ATP-binding affinity of the ATP-hydrolyzing subunit KdpB by the formation of a transient KdpB/KdpC/ATP ternary complex. The protein is Potassium-transporting ATPase KdpC subunit of Pseudomonas putida (strain W619).